A 276-amino-acid polypeptide reads, in one-letter code: C-type lectin domain family 12 member B (276 aa).

Topologically, residues 1 to 43 (MSEDMTYATLTFQDSVAAGNNQDRNNLRKRGYPAPSSIWRQAA) are cytoplasmic. Residues 5-10 (MTYATL) carry the ITIM motif motif. Tyr-7 bears the Phosphotyrosine mark. Residues 44–64 (LGLLTLCVMLLIGLVTLGIMF) traverse the membrane as a helical; Signal-anchor for type II membrane protein segment. The Extracellular segment spans residues 65–276 (LQMSSEINSD…AALVKIEDLD (212 aa)). 3 N-linked (GlcNAc...) asparagine glycosylation sites follow: Asn-91, Asn-176, and Asn-237. The region spanning 150–264 (YQTSCYYFAV…CSAEISWICE (115 aa)) is the C-type lectin domain. Disulfide bonds link Cys-172–Cys-263 and Cys-242–Cys-255.

In terms of assembly, homodimer. Interacts (via ITIM motif) with PTPN6. Interacts (via ITIM motif) with PTPN11; this interaction triggers dephosphorylation and activation of PTPN11.

The protein resides in the cell membrane. Functionally, inhibitory receptor postulated to negatively regulate immune and non-immune functions. Upon phosphorylation, recruits SH2 domain-containing PTPN6 and PTPN11 phosphatases to its ITIM motif and antagonizes activation signals. Although it inhibits KLRK1/NKG2D-mediated signaling, it does not bind known ligands of KLRK1/NKG2D and therefore is not its inhibitory counterpart. May limit activation of myeloid cell subsets in response to infection or tissue inflammation. May protect target cells against natural killer cell-mediated lysis. May negatively regulate cell cycle and differentiation of melanocytes via inactivation of STAT3. This is C-type lectin domain family 12 member B (CLEC12B) from Bos taurus (Bovine).